We begin with the raw amino-acid sequence, 268 residues long: uncharacterized protein (268 aa).

A run of 4 helical transmembrane segments spans residues 32–52 (SLLLISVFSTSFIVPLIIFFI), 70–90 (VFVGIPLGFGILNLVIFAFLF), 125–145 (GVSSMLFLAFTTPMVELFYIF), and 237–257 (IKYILFIAIFDIFLIILAYLT).

It belongs to the CbiQ family.

It localises to the cell membrane. This is an uncharacterized protein from Methanocaldococcus jannaschii (strain ATCC 43067 / DSM 2661 / JAL-1 / JCM 10045 / NBRC 100440) (Methanococcus jannaschii).